The primary structure comprises 262 residues: UPF0739 protein C1orf74 homolog (262 aa).

Belongs to the UPF0739 family.

The chain is UPF0739 protein C1orf74 homolog from Xenopus laevis (African clawed frog).